A 630-amino-acid polypeptide reads, in one-letter code: Biosynthetic arginine decarboxylase (630 aa).

An N6-(pyridoxal phosphate)lysine modification is found at K99. 281–291 (VDIGGGLGVDY) provides a ligand contact to substrate.

The protein belongs to the Orn/Lys/Arg decarboxylase class-II family. SpeA subfamily. It depends on Mg(2+) as a cofactor. Pyridoxal 5'-phosphate is required as a cofactor.

It carries out the reaction L-arginine + H(+) = agmatine + CO2. It participates in amine and polyamine biosynthesis; agmatine biosynthesis; agmatine from L-arginine: step 1/1. In terms of biological role, catalyzes the biosynthesis of agmatine from arginine. This is Biosynthetic arginine decarboxylase from Phocaeicola vulgatus (strain ATCC 8482 / DSM 1447 / JCM 5826 / CCUG 4940 / NBRC 14291 / NCTC 11154) (Bacteroides vulgatus).